Consider the following 376-residue polypeptide: Germination-specific cysteine protease 1 (376 aa).

A signal peptide spans 1–22 (MAPSTKVLSLLLLYVVVSLASG). Positions 23–144 (DESIINDHLQ…KYSAAVNGKE (122 aa)) are cleaved as a propeptide — activation peptide. Asn-93 is a glycosylation site (N-linked (GlcNAc...) asparagine). Cystine bridges form between Cys-166–Cys-208, Cys-200–Cys-241, and Cys-299–Cys-351. Cys-169 is a catalytic residue. Residues His-305 and Asn-325 contribute to the active site.

Belongs to the peptidase C1 family.

Its function is as follows. Probable thiol protease. The protein is Germination-specific cysteine protease 1 of Arabidopsis thaliana (Mouse-ear cress).